The chain runs to 565 residues: Membrane protein insertase YidC (565 aa).

The next 6 membrane-spanning stretches (helical) occupy residues 6–26 (VLLI…WSKN), 348–368 (LMAL…SLLH), 370–390 (WGWA…PLSA), 437–457 (GGCF…WVLV), 479–499 (PYFI…KLTP), and 516–536 (PLIF…YWVI).

It belongs to the OXA1/ALB3/YidC family. Type 1 subfamily. Interacts with the Sec translocase complex via SecD. Specifically interacts with transmembrane segments of nascent integral membrane proteins during membrane integration.

It localises to the cell inner membrane. In terms of biological role, required for the insertion and/or proper folding and/or complex formation of integral membrane proteins into the membrane. Involved in integration of membrane proteins that insert both dependently and independently of the Sec translocase complex, as well as at least some lipoproteins. Aids folding of multispanning membrane proteins. The protein is Membrane protein insertase YidC of Xylella fastidiosa (strain M23).